The primary structure comprises 144 residues: Cytochrome c oxidase subunit 4 isoform 1, mitochondrial (144 aa).

Residues 1–73 (SVVKSEDFSL…SFAEMNRGSN (73 aa)) are Mitochondrial matrix-facing. N6-acetyllysine; alternate is present on Lys-4. Lys-4 carries the post-translational modification N6-succinyllysine; alternate. Lys-28 carries the post-translational modification N6-acetyllysine. Ser-31 and Ser-33 each carry phosphoserine. Lys-35 bears the N6-acetyllysine; alternate mark. Lys-35 is subject to N6-succinyllysine; alternate. At Lys-42 the chain carries N6-acetyllysine. Residues 74–99 (EWKTVVGGAMFFIGFTALVIMWQKHY) traverse the membrane as a helical segment. Topologically, residues 100–144 (VYGPLPQSFDKEWVAKQTKRMLDMKVNPIQGLASKWDYEKNEWKK) are mitochondrial intermembrane.

The protein belongs to the cytochrome c oxidase IV family. Component of the cytochrome c oxidase (complex IV, CIV), a multisubunit enzyme composed of 14 subunits. The complex is composed of a catalytic core of 3 subunits MT-CO1, MT-CO2 and MT-CO3, encoded in the mitochondrial DNA, and 11 supernumerary subunits COX4I, COX5A, COX5B, COX6A, COX6B, COX6C, COX7A, COX7B, COX7C, COX8 and NDUFA4, which are encoded in the nuclear genome. The complex exists as a monomer or a dimer and forms supercomplexes (SCs) in the inner mitochondrial membrane with NADH-ubiquinone oxidoreductase (complex I, CI) and ubiquinol-cytochrome c oxidoreductase (cytochrome b-c1 complex, complex III, CIII), resulting in different assemblies (supercomplex SCI(1)III(2)IV(1) and megacomplex MCI(2)III(2)IV(2)). Interacts with PHB2; the interaction decreases in absence of SPHK2. Interacts with AFG1L. Interacts with ABCB7; this interaction allows the regulation of cellular iron homeostasis and cellular reactive oxygen species (ROS) levels in cardiomyocytes. Interacts with FLVCR2; this interaction occurs in the absence of heme and is disrupted upon heme binding. Interacts with IRGC.

The protein localises to the mitochondrion inner membrane. Its pathway is energy metabolism; oxidative phosphorylation. Component of the cytochrome c oxidase, the last enzyme in the mitochondrial electron transport chain which drives oxidative phosphorylation. The respiratory chain contains 3 multisubunit complexes succinate dehydrogenase (complex II, CII), ubiquinol-cytochrome c oxidoreductase (cytochrome b-c1 complex, complex III, CIII) and cytochrome c oxidase (complex IV, CIV), that cooperate to transfer electrons derived from NADH and succinate to molecular oxygen, creating an electrochemical gradient over the inner membrane that drives transmembrane transport and the ATP synthase. Cytochrome c oxidase is the component of the respiratory chain that catalyzes the reduction of oxygen to water. Electrons originating from reduced cytochrome c in the intermembrane space (IMS) are transferred via the dinuclear copper A center (CU(A)) of subunit 2 and heme A of subunit 1 to the active site in subunit 1, a binuclear center (BNC) formed by heme A3 and copper B (CU(B)). The BNC reduces molecular oxygen to 2 water molecules using 4 electrons from cytochrome c in the IMS and 4 protons from the mitochondrial matrix. This is Cytochrome c oxidase subunit 4 isoform 1, mitochondrial (COX4I1) from Pan troglodytes (Chimpanzee).